Here is a 937-residue protein sequence, read N- to C-terminus: Glycine dehydrogenase (decarboxylating) (937 aa).

An N6-(pyridoxal phosphate)lysine modification is found at Lys-686.

It belongs to the GcvP family. The glycine cleavage system is composed of four proteins: P, T, L and H. It depends on pyridoxal 5'-phosphate as a cofactor.

The enzyme catalyses N(6)-[(R)-lipoyl]-L-lysyl-[glycine-cleavage complex H protein] + glycine + H(+) = N(6)-[(R)-S(8)-aminomethyldihydrolipoyl]-L-lysyl-[glycine-cleavage complex H protein] + CO2. Its function is as follows. The glycine cleavage system catalyzes the degradation of glycine. The P protein binds the alpha-amino group of glycine through its pyridoxal phosphate cofactor; CO(2) is released and the remaining methylamine moiety is then transferred to the lipoamide cofactor of the H protein. In Mesorhizobium japonicum (strain LMG 29417 / CECT 9101 / MAFF 303099) (Mesorhizobium loti (strain MAFF 303099)), this protein is Glycine dehydrogenase (decarboxylating).